Here is a 531-residue protein sequence, read N- to C-terminus: Transcription factor LG2 (531 aa).

2 disordered regions span residues 115 to 154 (RHQQ…ASSA) and 195 to 220 (LHGG…KLVD). The segment covering 116–154 (HQQQLHSGNSQSVGSTGTDSSSAQNTMSQMELVSPASSA) has biased composition (polar residues). Residues 220-264 (DAKTERRLAQNREAARKSRLRKKAYVQQLETSRIRLQQVEHELQR) form the bZIP domain. Residues 222–242 (KTERRLAQNREAARKSRLRKK) are basic motif. The Nuclear localization signal signature appears at 224–231 (ERRLAQNR). The tract at residues 248 to 262 (LETSRIRLQQVEHEL) is leucine-zipper. One can recognise a DOG1 domain in the interval 285–499 (AAMFDMEYAR…RALSNLWASR (215 aa)).

It belongs to the bZIP family. Binds DNA as a dimer. As to expression, expression in meristem/developing ligule regions.

It localises to the nucleus. In terms of biological role, required for the formation of the blade-sheath boundary in leaves. Promotes flowering. The protein is Transcription factor LG2 of Zea mays (Maize).